Consider the following 320-residue polypeptide: Cytochrome f (320 aa).

A signal peptide spans 1-35 (MENKNTFSWVKEQMTRSISVSIMIYVITQTSISNA). 4 residues coordinate heme: Tyr36, Cys56, Cys59, and His60. The chain crosses the membrane as a helical span at residues 286 to 306 (VQGLLFFFASVILAQVFLVLK).

It belongs to the cytochrome f family. The 4 large subunits of the cytochrome b6-f complex are cytochrome b6, subunit IV (17 kDa polypeptide, petD), cytochrome f and the Rieske protein, while the 4 small subunits are PetG, PetL, PetM and PetN. The complex functions as a dimer. Requires heme as cofactor.

It localises to the plastid. It is found in the chloroplast thylakoid membrane. Its function is as follows. Component of the cytochrome b6-f complex, which mediates electron transfer between photosystem II (PSII) and photosystem I (PSI), cyclic electron flow around PSI, and state transitions. This is Cytochrome f from Lolium perenne (Perennial ryegrass).